A 309-amino-acid polypeptide reads, in one-letter code: Zinc finger protein-like 1 homolog (309 aa).

Residues 1–43 (MGLCKCPKRKVTNLFCYEHRVNVCEFCLVDNHPNCVVQSYLTW) form a B box-type; degenerate zinc finger. The RING-type; atypical zinc-finger motif lies at 53–101 (CSLCKTTLAEGDTIRLNCLHLLHWKCFDEWAANFPATTAPAGYRCPCCS). Positions 200–221 (GAESSSDTRPLLQLRDADNEEN) are disordered. Residues 254–274 (KIALFVIFLAVLALITIIMVM) form a helical membrane-spanning segment.

Belongs to the ZFPL1 family.

The protein localises to the membrane. The chain is Zinc finger protein-like 1 homolog from Caenorhabditis elegans.